Here is a 443-residue protein sequence, read N- to C-terminus: MFLPQEIIRKKRNGEALSTQEIQFFVQGITNNTIGEGQIAALAMAVYFKDMTMDERVALTCAMRDSGMVLNWEHLNLGGPIVDKHSTGGVGDVVSLMLGPMVAACGGFVPMISGRGLGHTGGTLDKLDAIPGYQTSVDNDRFLKVVKEAGVAIIGQTGDLAPADKRIYAVRDITATVESIAMITGSILSKKLASGLEALVMDVKVGSGAFMPTFEASEELAKSIVAVANGAGCRTSALLTDMNQVLASSAGNGVEVREAVRYLTGEYRNPRIHEVTMSLCAEMLISAHLASDDADARRKLQAVLDNGKAAEIFGRMVTGLGGPSDFMERYDSYLPKAAIVRPVYAANAGFVTAMDTRELGLAVVAMGGGRRAAGDKLDYAVGLTDFIRLGQSVDADKPLALIHAQTEDQFAQAASMVQAAVKIGDTQPQALPEVYRRIGLADL.

It belongs to the thymidine/pyrimidine-nucleoside phosphorylase family. Homodimer.

The catalysed reaction is thymidine + phosphate = 2-deoxy-alpha-D-ribose 1-phosphate + thymine. It functions in the pathway pyrimidine metabolism; dTMP biosynthesis via salvage pathway; dTMP from thymine: step 1/2. The enzymes which catalyze the reversible phosphorolysis of pyrimidine nucleosides are involved in the degradation of these compounds and in their utilization as carbon and energy sources, or in the rescue of pyrimidine bases for nucleotide synthesis. In Aeromonas salmonicida (strain A449), this protein is Thymidine phosphorylase.